A 304-amino-acid polypeptide reads, in one-letter code: MERAEHIYQKLVAICGEENVLRDEPMKHHTLVRIGGKADFLVWPETYEQVVDVLRLKEEYELPFTLLGNGSNVIIRDGGLRGIVMQLKHLNRIWREGNNIIAQSGADIKAVSRFALEQHLTGLEFACGIPGSVGGAIMMNAGAYGGEVKDVLDHVKVATLTGELKTLTNEELELGYRTSLISRTHDIVLEVVFALQPGDYGQIKAKMDDLTFQRESKQPLEYPSVGSVFKRPPGYFAGKLIQDSGLQGKGFGGAEVSTKHAGFIINKNNATAADYIATIEMVRKTVKEKFGVELELEVKILGEE.

An FAD-binding PCMH-type domain is found at 34–198 (IGGKADFLVW…LEVVFALQPG (165 aa)). The active site involves R177. The active-site Proton donor is S227. E297 is an active-site residue.

This sequence belongs to the MurB family. The cofactor is FAD.

It is found in the cytoplasm. The catalysed reaction is UDP-N-acetyl-alpha-D-muramate + NADP(+) = UDP-N-acetyl-3-O-(1-carboxyvinyl)-alpha-D-glucosamine + NADPH + H(+). The protein operates within cell wall biogenesis; peptidoglycan biosynthesis. Its function is as follows. Cell wall formation. This Geobacillus thermodenitrificans (strain NG80-2) protein is UDP-N-acetylenolpyruvoylglucosamine reductase.